The chain runs to 448 residues: Asparagine--tRNA ligase (448 aa).

It belongs to the class-II aminoacyl-tRNA synthetase family. In terms of assembly, homodimer.

The protein resides in the cytoplasm. The enzyme catalyses tRNA(Asn) + L-asparagine + ATP = L-asparaginyl-tRNA(Asn) + AMP + diphosphate + H(+). This Streptococcus sanguinis (strain SK36) protein is Asparagine--tRNA ligase.